The following is a 542-amino-acid chain: Gamma-terpinene synthase 1 (542 aa).

2 residues coordinate Mn(2+): aspartate 295 and aspartate 299. Positions 295 to 299 (DDVYD) match the DDXXD motif motif. 2 homodimerization regions span residues 301-307 (YDTLDEL) and 373-410 (EAKW…FTLP). 2 residues coordinate Mn(2+): aspartate 439 and glutamate 447.

The protein belongs to the terpene synthase family. As to quaternary structure, homodimer. Mn(2+) is required as a cofactor. Mg(2+) serves as cofactor. As to expression, mostly expressed in flowers and, to a lower extent, in leaves, especially in glandular trichomes.

The enzyme catalyses (2E)-geranyl diphosphate = gamma-terpinene + diphosphate. The catalysed reaction is (2E)-geranyl diphosphate = alpha-terpinene + diphosphate. The protein operates within secondary metabolite biosynthesis; terpenoid biosynthesis. Functionally, involved in the biosynthesis of phenolic monoterpenes natural products thymol and carvacrol which have a broad range of biological activities acting as antimicrobial compounds, insecticides, antioxidants and pharmaceutical agents. Monoterpene synthase which catalyzes the conversion of geranyl diphosphate (GPP) to gamma-terpinene and the minor products alpha-thujene, alpha-terpinene, myrcene, sabinene, (+)-R-limonene, alpha-pinene and alpha-phellandrene. This chain is Gamma-terpinene synthase 1, found in Thymus vulgaris (Thyme).